A 343-amino-acid polypeptide reads, in one-letter code: Phosphoribosylformylglycinamidine cyclo-ligase (343 aa).

This sequence belongs to the AIR synthase family.

It is found in the cytoplasm. It catalyses the reaction 2-formamido-N(1)-(5-O-phospho-beta-D-ribosyl)acetamidine + ATP = 5-amino-1-(5-phospho-beta-D-ribosyl)imidazole + ADP + phosphate + H(+). It participates in purine metabolism; IMP biosynthesis via de novo pathway; 5-amino-1-(5-phospho-D-ribosyl)imidazole from N(2)-formyl-N(1)-(5-phospho-D-ribosyl)glycinamide: step 2/2. In Staphylococcus epidermidis (strain ATCC 35984 / DSM 28319 / BCRC 17069 / CCUG 31568 / BM 3577 / RP62A), this protein is Phosphoribosylformylglycinamidine cyclo-ligase.